The chain runs to 197 residues: Rac-like GTP-binding protein ARAC11 (197 aa).

13–20 (GDGAVGKT) provides a ligand contact to GTP. The short motif at 35–43 (YVPTVFDNF) is the Effector region element. GTP contacts are provided by residues 60–64 (DTAGQ) and 118–121 (TKLD). The residue at position 194 (Cys194) is a Cysteine methyl ester. Cys194 carries S-geranylgeranyl cysteine lipidation. A propeptide spans 195 to 197 (SIL) (removed in mature form).

It belongs to the small GTPase superfamily. Rho family. Part of a complex containing ROPGEF1 and PRK2. Interacts with UGT1, ICR1, ICR2, ICR3, ICR4 and ICR5. Interacts with PHIP1 when activated by GTP. As to expression, exclusively expressed in mature pollen and pollen tubes.

The protein resides in the cytoplasm. It localises to the membrane. The catalysed reaction is GTP + H2O = GDP + phosphate + H(+). Its function is as follows. May be involved in cell polarity control during the actin-dependent tip growth of pollen tubes. May regulate callose synthase 1 (CALS1) activity through the interaction with UGT1. Inactive GDP-bound Rho GTPases reside in the cytosol, are found in a complex with Rho GDP-dissociation inhibitors (Rho GDIs), and are released from the GDI protein in order to translocate to membranes upon activation. This is Rac-like GTP-binding protein ARAC11 from Arabidopsis thaliana (Mouse-ear cress).